The sequence spans 375 residues: MQCALYDAGRCRSCQWITQSVNEQLSAKTADLHRLLAGLPVEQWRTPIGGPEQHFRNKAKMVVSGSVEKPLFGMLHRDGTPVDLCGCPLYPASFAPVFSALKPFIARAGLTPYNVARKRGELKYLLLTESQFDGGMMLRFVLRSETKLTQLRAALPWLRAQLPQLRVITANIQPVHMAIMEGETEIYLTDQHALAERFNDVPLWIRPQSFFQTNPTVASRLYATARDWVGQLPVRHMWDLFCGVGGFGLHCATPQMQLTGIEIAPEAIACARQSAAELGLTRLHFQALDSTQFATAQGETPDLVLVNPPRRGIGKPLCDYLAQIAPRFIIYSSCNAQTMAQDIRHLPNYRIQRVQLFDMFPHTAHYEVLTLLCRL.

Cys3, Cys11, Cys14, and Cys87 together coordinate [4Fe-4S] cluster. S-adenosyl-L-methionine-binding residues include Gln212, Phe241, Glu262, and Asn307. Cys334 serves as the catalytic Nucleophile.

It belongs to the class I-like SAM-binding methyltransferase superfamily. RNA M5U methyltransferase family. RlmC subfamily.

It carries out the reaction uridine(747) in 23S rRNA + S-adenosyl-L-methionine = 5-methyluridine(747) in 23S rRNA + S-adenosyl-L-homocysteine + H(+). Catalyzes the formation of 5-methyl-uridine at position 747 (m5U747) in 23S rRNA. This is 23S rRNA (uracil(747)-C(5))-methyltransferase RlmC from Salmonella arizonae (strain ATCC BAA-731 / CDC346-86 / RSK2980).